The following is a 695-amino-acid chain: Follicle-stimulating hormone receptor (695 aa).

Residues 1–17 form the signal peptide; that stretch reads MSLLLVSLLAFLTLGSG. 2 disulfide bridges follow: Cys-18–Cys-25 and Cys-23–Cys-32. An LRRNT domain is found at 18-46; sequence CHHRICHCSNGVFLCQESKVTEIPPDLPR. The Extracellular segment spans residues 18–366; it reads CHHRICHCSN…EDIMGHDILR (349 aa). 9 LRR repeats span residues 49–72, 73–97, 98–118, 119–143, 144–169, 170–192, 193–216, 217–240, and 241–259; these read VELR…FGDL, EKIE…LPKL, HEIR…AFQN, LPNL…KIQS, LQKV…VGLS, FESM…AFNG, TQLD…VFQG, ASGP…GLEN, and LKKL…PSLE. Residues Asn-191 and Asn-199 are each glycosylated (N-linked (GlcNAc...) asparagine). Intrachain disulfides connect Cys-275-Cys-346, Cys-276-Cys-292, Cys-276-Cys-356, and Cys-292-Cys-338. A glycan (N-linked (GlcNAc...) asparagine) is linked at Asn-293. Tyr-335 is subject to Sulfotyrosine. Residues 367–387 form a helical membrane-spanning segment; sequence VLIWFISILAITGNIIVLVIL. The Cytoplasmic segment spans residues 388–398; sequence ITSQYKLTVPR. The chain crosses the membrane as a helical span at residues 399–421; sequence FLMCNLAFADLCIGIYLLLIASV. Residues 422–443 lie on the Extracellular side of the membrane; the sequence is DIHTKTQYHNYAIDWQTGAGCD. A disulfide bridge connects residues Cys-442 and Cys-517. The helical transmembrane segment at 444–465 threads the bilayer; sequence AAGFFTVFASELSVYTLTAITL. Over 466-485 the chain is Cytoplasmic; the sequence is ERWHTITHAMQLQCKVQLRH. A helical membrane pass occupies residues 486–508; that stretch reads AASIMLVGWIFAFTVALFPIFGI. Topologically, residues 509-528 are extracellular; that stretch reads SSYMKVSICLPMDIDSPLSQ. Residues 529–550 form a helical membrane-spanning segment; the sequence is LYVVSLLVLNVLAFVVICGCYT. The Cytoplasmic segment spans residues 551 to 573; the sequence is HIYLTVRNPNIMSSSSDTKIAKR. A helical transmembrane segment spans residues 574–597; the sequence is MAMLIFTDFLCMAPISFFAISASL. The Extracellular portion of the chain corresponds to 598–608; the sequence is KVPLITVSKSK. The chain crosses the membrane as a helical span at residues 609 to 630; it reads ILLVLFYPINSCANPFLYAIFT. The Cytoplasmic segment spans residues 631–695; that stretch reads KNFRRDVFIL…LIPLSRLAQN (65 aa).

It belongs to the G-protein coupled receptor 1 family. FSH/LSH/TSH subfamily. In terms of assembly, homotrimer. Functions as a homotrimer binding the FSH hormone heterodimer composed of CGA and FSHB. Interacts with ARRB2. Interacts with APPL2; interaction is independent of follicle stimulating hormone stimulation. N-glycosylated; indirectly required for FSH-binding, possibly via a conformational change that allows high affinity binding of hormone. In terms of processing, sulfated.

Its subcellular location is the cell membrane. G protein-coupled receptor for follitropin, the follicle-stimulating hormone. Through cAMP production activates the downstream PI3K-AKT and ERK1/ERK2 signaling pathways. In Sus scrofa (Pig), this protein is Follicle-stimulating hormone receptor (FSHR).